The following is a 465-amino-acid chain: Na(+)-translocating NADH-quinone reductase subunit A (465 aa).

Belongs to the NqrA family. Composed of six subunits; NqrA, NqrB, NqrC, NqrD, NqrE and NqrF.

The enzyme catalyses a ubiquinone + n Na(+)(in) + NADH + H(+) = a ubiquinol + n Na(+)(out) + NAD(+). Functionally, NQR complex catalyzes the reduction of ubiquinone-1 to ubiquinol by two successive reactions, coupled with the transport of Na(+) ions from the cytoplasm to the periplasm. NqrA to NqrE are probably involved in the second step, the conversion of ubisemiquinone to ubiquinol. The protein is Na(+)-translocating NADH-quinone reductase subunit A of Chlamydia muridarum (strain MoPn / Nigg).